Here is a 736-residue protein sequence, read N- to C-terminus: Dynamin-1-like protein (736 aa).

Met1 is modified (N-acetylmethionine). Residues 22–302 (IIQLPQIVVV…LMHHIRDCLP (281 aa)) enclose the Dynamin-type G domain. The segment at 32–39 (GTQSSGKS) is G1 motif. 32–40 (GTQSSGKSS) lines the GTP pocket. Residues 58–60 (VTR) are G2 motif. Residues 146-149 (DLPG) form a G3 motif region. The tract at residues 215 to 218 (TKLD) is G4 motif. GTP is bound by residues 215–221 (TKLDLMD) and 246–249 (NRSQ). Residues 245 to 248 (VNRS) are G5 motif. The tract at residues 344–489 (YCNTIEGTAK…NEMVHNLVAI (146 aa)) is middle domain. The segment at 448-685 (NYSTQELLRF…NHVKDTLQSE (238 aa)) is interaction with GSK3B. The tract at residues 502–569 (ADACGLMNNN…IQDSRRETKN (68 aa)) is b domain. The disordered stretch occupies residues 523–590 (ELPSAVSRDK…VQEPTTGNWR (68 aa)). Ser529 is subject to Phosphoserine. Residues Lys532 and Lys535 each participate in a glycyl lysine isopeptide (Lys-Gly) (interchain with G-Cter in SUMO) cross-link. The segment covering 537–554 (PSALAPASQEPSPAASAE) has biased composition (low complexity). Ser548 is subject to Phosphoserine. Over residues 555–568 (ADGKLIQDSRRETK) the composition is skewed to basic and acidic residues. Residues Lys558 and Lys568 each participate in a glycyl lysine isopeptide (Lys-Gly) (interchain with G-Cter in SUMO) cross-link. Residues Thr585 and Thr586 are each glycosylated (O-linked (GlcNAc) threonine). Lys594 participates in a covalent cross-link: Glycyl lysine isopeptide (Lys-Gly) (interchain with G-Cter in SUMO). Lys597 is subject to N6-acetyllysine; alternate. Residue Lys597 forms a Glycyl lysine isopeptide (Lys-Gly) (interchain with G-Cter in SUMO); alternate linkage. Residue Lys606 forms a Glycyl lysine isopeptide (Lys-Gly) (interchain with G-Cter in SUMO) linkage. Position 607 is a phosphoserine (Ser607). Residue Lys608 forms a Glycyl lysine isopeptide (Lys-Gly) (interchain with G-Cter in SUMO) linkage. At Ser616 the chain carries Phosphoserine; by CDK1 and PINK1. At Ser637 the chain carries Phosphoserine; by CAMK1 and PKA. S-nitrosocysteine is present on Cys644. The 92-residue stretch at 644–735 (CEVIERLIKS…IIAEIRETHL (92 aa)) folds into the GED domain. The interval 654-668 (YFLIVRKNIQDSVPK) is important for homodimerization.

Belongs to the TRAFAC class dynamin-like GTPase superfamily. Dynamin/Fzo/YdjA family. Homotetramer; dimerizes through the N-terminal GTP-middle region of one molecule binding to the GED domain of another DNM1L molecule. Oligomerizes in a GTP-dependent manner to form membrane-associated tubules with a spiral pattern. Interacts with GSK3B and MARCHF5. Interacts (via the GTPase and B domains) with UBE2I; the interaction promotes sumoylation of DNM1L, mainly in its B domain. Interacts with PPP3CA; the interaction dephosphorylates DNM1L and regulates its transition to mitochondria. Interacts with BCL2L1 isoform BCL-X(L) and CLTA; DNM1L and BCL2L1 isoform BCL-X(L) may form a complex in synaptic vesicles that also contains clathrin and MFF. Interacts with MFF; the interaction is inhibited by C11orf65/MFI. Interacts with FIS1; may form part of a larger protein complex at the endoplasmic reticulum-mitochondrial interface during mitochondrial fission. Interacts with CANX. Interacts with BCAP31. Interacts with MIEF2 and MIEF1; GTP-dependent, regulates GTP hydrolysis and DNM1L oligomerization. Interacts with PGAM5; this interaction leads to dephosphorylation at Ser-656 and activation of GTPase activity and eventually to mitochondria fragmentation. Interacts with RALBP1; during mitosis, recruits DNM1L to the mitochondrion and mediates its activation by the mitotic kinase cyclin B-CDK1. Interacts with FUNDC1; this interaction recruits DNM1L/DRP1 at ER-mitochondria contact sites. Post-translationally, phosphorylation/dephosphorylation events on two sites near the GED domain regulate mitochondrial fission. Phosphorylation on Ser-637 by CAMK1 and PKA inhibits the GTPase activity, leading to a defect in mitochondrial fission promoting mitochondrial elongation. Dephosphorylated on this site by PPP3CA which promotes mitochondrial fission. Phosphorylation on Ser-616 by CDK1 and PINK1 activates the GTPase activity and promotes mitochondrial fission. Phosphorylated in a circadian manner at Ser-637. Dephosphorylated by PGAM5. In terms of processing, sumoylated on various lysine residues within the B domain, probably by MUL1. Sumoylation positively regulates mitochondrial fission. Desumoylated by SENP5 during G2/M transition of mitosis. Appears to be linked to its catalytic activity. S-nitrosylation increases DNM1L dimerization, mitochondrial fission and causes neuronal damage. Post-translationally, ubiquitination by MARCHF5 affects mitochondrial morphology. In terms of processing, O-GlcNAcylation augments the level of the GTP-bound active form of DNM1L and induces translocation from the cytoplasm to mitochondria in cardiomyocytes. It also decreases phosphorylation at Ser-637. As to expression, ubiquitously expressed with highest levels found in skeletal muscles, heart, kidney and brain. Isoform 1 is brain-specific. Isoform 2 and isoform 3 are predominantly expressed in testis and skeletal muscles respectively. Isoform 4 is weakly expressed in brain, heart and kidney. Isoform 5 is dominantly expressed in liver, heart and kidney. Isoform 6 is expressed in neurons.

It is found in the cytoplasm. The protein localises to the cytosol. It localises to the golgi apparatus. The protein resides in the endomembrane system. Its subcellular location is the mitochondrion outer membrane. It is found in the peroxisome. The protein localises to the membrane. It localises to the clathrin-coated pit. The protein resides in the cytoplasmic vesicle. Its subcellular location is the secretory vesicle. It is found in the synaptic vesicle membrane. The enzyme catalyses GTP + H2O = GDP + phosphate + H(+). GTPase activity is increased by binding to phospholipid membranes. Its function is as follows. Functions in mitochondrial and peroxisomal division. Mediates membrane fission through oligomerization into membrane-associated tubular structures that wrap around the scission site to constrict and sever the mitochondrial membrane through a GTP hydrolysis-dependent mechanism. The specific recruitment at scission sites is mediated by membrane receptors like MFF, MIEF1 and MIEF2 for mitochondrial membranes. While the recruitment by the membrane receptors is GTP-dependent, the following hydrolysis of GTP induces the dissociation from the receptors and allows DNM1L filaments to curl into closed rings that are probably sufficient to sever a double membrane. Acts downstream of PINK1 to promote mitochondrial fission in a PRKN-dependent manner. Plays an important role in mitochondrial fission during mitosis. Through its function in mitochondrial division, ensures the survival of at least some types of postmitotic neurons, including Purkinje cells, by suppressing oxidative damage. Required for normal brain development, including that of cerebellum. Facilitates developmentally regulated apoptosis during neural tube formation. Required for a normal rate of cytochrome c release and caspase activation during apoptosis; this requirement may depend upon the cell type and the physiological apoptotic cues. Required for formation of endocytic vesicles. Proposed to regulate synaptic vesicle membrane dynamics through association with BCL2L1 isoform Bcl-X(L) which stimulates its GTPase activity in synaptic vesicles; the function may require its recruitment by MFF to clathrin-containing vesicles. Required for programmed necrosis execution. Rhythmic control of its activity following phosphorylation at Ser-637 is essential for the circadian control of mitochondrial ATP production. In terms of biological role, inhibits peroxisomal division when overexpressed. This chain is Dynamin-1-like protein, found in Homo sapiens (Human).